Reading from the N-terminus, the 1213-residue chain is DNA-directed RNA polymerase subunit beta' (1213 aa).

4 residues coordinate Zn(2+): C60, C62, C75, and C78. Mg(2+) is bound by residues D450, D452, and D454. C819, C893, C900, and C903 together coordinate Zn(2+).

It belongs to the RNA polymerase beta' chain family. In terms of assembly, the RNAP catalytic core consists of 2 alpha, 1 beta, 1 beta' and 1 omega subunit. When a sigma factor is associated with the core the holoenzyme is formed, which can initiate transcription. Requires Mg(2+) as cofactor. It depends on Zn(2+) as a cofactor.

The enzyme catalyses RNA(n) + a ribonucleoside 5'-triphosphate = RNA(n+1) + diphosphate. Functionally, DNA-dependent RNA polymerase catalyzes the transcription of DNA into RNA using the four ribonucleoside triphosphates as substrates. The polypeptide is DNA-directed RNA polymerase subunit beta' (Streptococcus pyogenes serotype M4 (strain MGAS10750)).